Consider the following 250-residue polypeptide: UPF0193 protein EVG1 homolog (250 aa).

The tract at residues 86-110 is disordered; that stretch reads ESLRNGEPLPLPEPPRPNTNNDPDK.

It belongs to the UPF0193 (EVG1) family.

The chain is UPF0193 protein EVG1 homolog from Drosophila melanogaster (Fruit fly).